Reading from the N-terminus, the 99-residue chain is MYAIIEVGGKQLLVKEQEVIFTEKIEGNAGEKVEFDKVLLFGDKVGRPYLEKVKVIGEIQKQSKHKKIIVYRHNAKSTHKRKLGHRQPYTRVKILEIKG.

It belongs to the bacterial ribosomal protein bL21 family. In terms of assembly, part of the 50S ribosomal subunit. Contacts protein L20.

Functionally, this protein binds to 23S rRNA in the presence of protein L20. This is Large ribosomal subunit protein bL21 from Mycoplasmopsis pulmonis (strain UAB CTIP) (Mycoplasma pulmonis).